Here is a 601-residue protein sequence, read N- to C-terminus: Sulfite reductase [NADPH] flavoprotein alpha-component (601 aa).

The Flavodoxin-like domain occupies 64–202 (ITLISASQTG…AAQEWRARVV (139 aa)). FMN contacts are provided by residues 70–75 (SQTGNA), 117–120 (STQG), and 153–162 (LGDTSYEFFC). The FAD-binding FR-type domain occupies 236-450 (EAPLSASLAV…IEHNDNFRLP (215 aa)). FAD-binding positions include T324, A358, 388-391 (RLYS), 406-408 (TVG), Y412, and 421-424 (GGAS). NADP(+) contacts are provided by residues 521–522 (SR), 527–531 (KIYVQ), and D563. Residue Y601 coordinates FAD.

The protein belongs to the NADPH-dependent sulphite reductase flavoprotein subunit CysJ family. This sequence in the N-terminal section; belongs to the flavodoxin family. It in the C-terminal section; belongs to the flavoprotein pyridine nucleotide cytochrome reductase family. In terms of assembly, alpha(8)-beta(8). The alpha component is a flavoprotein, the beta component is a hemoprotein. The cofactor is FAD. It depends on FMN as a cofactor.

It catalyses the reaction hydrogen sulfide + 3 NADP(+) + 3 H2O = sulfite + 3 NADPH + 4 H(+). It participates in sulfur metabolism; hydrogen sulfide biosynthesis; hydrogen sulfide from sulfite (NADPH route): step 1/1. In terms of biological role, component of the sulfite reductase complex that catalyzes the 6-electron reduction of sulfite to sulfide. This is one of several activities required for the biosynthesis of L-cysteine from sulfate. The flavoprotein component catalyzes the electron flow from NADPH -&gt; FAD -&gt; FMN to the hemoprotein component. In Citrobacter koseri (strain ATCC BAA-895 / CDC 4225-83 / SGSC4696), this protein is Sulfite reductase [NADPH] flavoprotein alpha-component.